The following is a 382-amino-acid chain: Dodecanoyl-[acyl-carrier-protein] hydrolase, chloroplastic (382 aa).

Residues 1 to 83 constitute a chloroplast transit peptide; the sequence is MATTSLASAF…FSAAEKQWTN (83 aa). Active-site residues include Asn-283, His-285, and Cys-320.

The protein belongs to the acyl-ACP thioesterase family.

The protein localises to the plastid. Its subcellular location is the chloroplast. The enzyme catalyses dodecanoyl-[ACP] + H2O = dodecanoate + holo-[ACP] + H(+). In terms of biological role, plays an essential role in chain termination during de novo fatty acid synthesis. High thioesterase activity for myristoyl-ACP. This is Dodecanoyl-[acyl-carrier-protein] hydrolase, chloroplastic from Cinnamomum camphora (Camphor tree).